Here is a 422-residue protein sequence, read N- to C-terminus: UDP-N-acetylglucosamine 1-carboxyvinyltransferase (422 aa).

Residue 23-24 (KN) participates in phosphoenolpyruvate binding. R92 is a binding site for UDP-N-acetyl-alpha-D-glucosamine. Residue C116 is the Proton donor of the active site. C116 is modified (2-(S-cysteinyl)pyruvic acid O-phosphothioketal). Residues 121–125 (RPVDL), 161–164 (KVSV), D306, and I328 each bind UDP-N-acetyl-alpha-D-glucosamine.

The protein belongs to the EPSP synthase family. MurA subfamily.

Its subcellular location is the cytoplasm. It catalyses the reaction phosphoenolpyruvate + UDP-N-acetyl-alpha-D-glucosamine = UDP-N-acetyl-3-O-(1-carboxyvinyl)-alpha-D-glucosamine + phosphate. It functions in the pathway cell wall biogenesis; peptidoglycan biosynthesis. In terms of biological role, cell wall formation. Adds enolpyruvyl to UDP-N-acetylglucosamine. The polypeptide is UDP-N-acetylglucosamine 1-carboxyvinyltransferase (Aliivibrio fischeri (strain ATCC 700601 / ES114) (Vibrio fischeri)).